Here is a 107-residue protein sequence, read N- to C-terminus: Phosphoribosyl-ATP pyrophosphatase 1 (107 aa).

Belongs to the PRA-PH family.

Its subcellular location is the cytoplasm. The enzyme catalyses 1-(5-phospho-beta-D-ribosyl)-ATP + H2O = 1-(5-phospho-beta-D-ribosyl)-5'-AMP + diphosphate + H(+). The protein operates within amino-acid biosynthesis; L-histidine biosynthesis; L-histidine from 5-phospho-alpha-D-ribose 1-diphosphate: step 2/9. This chain is Phosphoribosyl-ATP pyrophosphatase 1 (hisE1), found in Rhodopseudomonas palustris (strain ATCC BAA-98 / CGA009).